Consider the following 406-residue polypeptide: Autotransporter heptosyltransferase TibC (406 aa).

3 residues coordinate ADP-D-glycero-beta-D-manno-heptose: Thr-107, Leu-108, and Gly-109. The active-site Proton acceptor is the Asp-110. ADP-D-glycero-beta-D-manno-heptose contacts are provided by Gln-224, Thr-226, Lys-230, Arg-257, Leu-281, Gly-302, and Glu-326. Positions 339, 342, 358, and 370 each coordinate Fe(3+).

The protein belongs to the glycosyltransferase 9 family. In terms of assembly, homododecamer composed of 6 homodimers forming a ring. The cofactor is Fe(3+).

The enzyme catalyses ADP-D-glycero-beta-D-manno-heptose + L-seryl-[protein] = O-(D-glycero-alpha-D-manno-heptosyl)-L-seryl-[protein] + ADP + H(+). In terms of biological role, glycosylates adhesin TibA. Specifically adds anomer D-glycero-beta-D-manno-heptose. Cannot use ADP-L-glycero-beta-D-manno-heptose as a sugar donor. This chain is Autotransporter heptosyltransferase TibC, found in Escherichia coli O78:H11 (strain H10407 / ETEC).